Reading from the N-terminus, the 205-residue chain is Urease accessory protein UreG (205 aa).

12 to 19 (GPVGSGKT) lines the GTP pocket.

It belongs to the SIMIBI class G3E GTPase family. UreG subfamily. In terms of assembly, homodimer. UreD, UreF and UreG form a complex that acts as a GTP-hydrolysis-dependent molecular chaperone, activating the urease apoprotein by helping to assemble the nickel containing metallocenter of UreC. The UreE protein probably delivers the nickel.

Its subcellular location is the cytoplasm. Its function is as follows. Facilitates the functional incorporation of the urease nickel metallocenter. This process requires GTP hydrolysis, probably effectuated by UreG. In Pseudomonas savastanoi pv. phaseolicola (strain 1448A / Race 6) (Pseudomonas syringae pv. phaseolicola (strain 1448A / Race 6)), this protein is Urease accessory protein UreG.